The sequence spans 305 residues: Glycine--tRNA ligase alpha subunit (305 aa).

This sequence belongs to the class-II aminoacyl-tRNA synthetase family. As to quaternary structure, tetramer of two alpha and two beta subunits.

It is found in the cytoplasm. The catalysed reaction is tRNA(Gly) + glycine + ATP = glycyl-tRNA(Gly) + AMP + diphosphate. The chain is Glycine--tRNA ligase alpha subunit from Streptococcus pneumoniae (strain CGSP14).